The chain runs to 453 residues: Probable glycine dehydrogenase (decarboxylating) subunit 1 (453 aa).

This sequence belongs to the GcvP family. N-terminal subunit subfamily. The glycine cleavage system is composed of four proteins: P, T, L and H. In this organism, the P 'protein' is a heterodimer of two subunits.

The catalysed reaction is N(6)-[(R)-lipoyl]-L-lysyl-[glycine-cleavage complex H protein] + glycine + H(+) = N(6)-[(R)-S(8)-aminomethyldihydrolipoyl]-L-lysyl-[glycine-cleavage complex H protein] + CO2. Functionally, the glycine cleavage system catalyzes the degradation of glycine. The P protein binds the alpha-amino group of glycine through its pyridoxal phosphate cofactor; CO(2) is released and the remaining methylamine moiety is then transferred to the lipoamide cofactor of the H protein. This is Probable glycine dehydrogenase (decarboxylating) subunit 1 from Dictyoglomus thermophilum (strain ATCC 35947 / DSM 3960 / H-6-12).